Here is a 219-residue protein sequence, read N- to C-terminus: Large ribosomal subunit protein uL4c (219 aa).

The interval 53–81 (REHTASTKTKSQVRGGGKKPWKQKGTGRA) is disordered. A compositionally biased stretch (basic residues) spans 68–79 (GGKKPWKQKGTG).

This sequence belongs to the universal ribosomal protein uL4 family. In terms of assembly, part of the 50S ribosomal subunit.

Its subcellular location is the plastid. It localises to the chloroplast. Probably binds the 23S rRNA. This chain is Large ribosomal subunit protein uL4c (rpl4), found in Cyanidium caldarium (Red alga).